A 644-amino-acid chain; its full sequence is Threonine--tRNA ligase (644 aa).

A TGS domain is found at 1 to 61 (MNVTIEGQVF…ADTTTIEPVF (61 aa)). The tract at residues 241–532 (DHRKLGQQLD…LTEHFAGAFP (292 aa)) is catalytic. Positions 333, 384, and 509 each coordinate Zn(2+).

Belongs to the class-II aminoacyl-tRNA synthetase family. In terms of assembly, homodimer. Requires Zn(2+) as cofactor.

The protein localises to the cytoplasm. The catalysed reaction is tRNA(Thr) + L-threonine + ATP = L-threonyl-tRNA(Thr) + AMP + diphosphate + H(+). Its function is as follows. Catalyzes the attachment of threonine to tRNA(Thr) in a two-step reaction: L-threonine is first activated by ATP to form Thr-AMP and then transferred to the acceptor end of tRNA(Thr). Also edits incorrectly charged L-seryl-tRNA(Thr). The sequence is that of Threonine--tRNA ligase from Nitratidesulfovibrio vulgaris (strain DSM 19637 / Miyazaki F) (Desulfovibrio vulgaris).